We begin with the raw amino-acid sequence, 83 residues long: Cytochrome b559 subunit alpha (83 aa).

A helical transmembrane segment spans residues 21–35 (VIHSITIPSLFIAGW). Heme is bound at residue His-23.

This sequence belongs to the PsbE/PsbF family. In terms of assembly, heterodimer of an alpha subunit and a beta subunit. PSII is composed of 1 copy each of membrane proteins PsbA, PsbB, PsbC, PsbD, PsbE, PsbF, PsbH, PsbI, PsbJ, PsbK, PsbL, PsbM, PsbT, PsbX, PsbY, PsbZ, Psb30/Ycf12, at least 3 peripheral proteins of the oxygen-evolving complex and a large number of cofactors. It forms dimeric complexes. The cofactor is heme b.

Its subcellular location is the plastid membrane. This b-type cytochrome is tightly associated with the reaction center of photosystem II (PSII). PSII is a light-driven water:plastoquinone oxidoreductase that uses light energy to abstract electrons from H(2)O, generating O(2) and a proton gradient subsequently used for ATP formation. It consists of a core antenna complex that captures photons, and an electron transfer chain that converts photonic excitation into a charge separation. This Cuscuta reflexa (Southern Asian dodder) protein is Cytochrome b559 subunit alpha.